A 168-amino-acid chain; its full sequence is MDWILPIAGIIAAIAFLVLCIGIVVVLISVKKNLDHVAKTLDGVEGQVQGITRETTDLLHKANRLTEDIQGKVERLNSVVDGVKGIGDSVQNLNGSVDRVTNSITHNISQNEDKISQVVQWSNVAMEIADKWQNRHYRRGSANYRNTSVGNDANHSNENYTTNVEKNF.

Residues 7-27 (IAGIIAAIAFLVLCIGIVVVL) traverse the membrane as a helical segment. The interval 144–168 (YRNTSVGNDANHSNENYTTNVEKNF) is disordered.

Belongs to the UPF0478 family.

Its subcellular location is the cell membrane. The chain is UPF0478 protein SH1183 from Staphylococcus haemolyticus (strain JCSC1435).